A 783-amino-acid polypeptide reads, in one-letter code: Outer membrane usher protein FanD (783 aa).

Residues 1-23 form the signal peptide; sequence MNRKKHQILKILLLCLISSKSSA. Cys-763 and Cys-782 are disulfide-bonded.

It belongs to the fimbrial export usher family.

The protein resides in the cell outer membrane. Involved in the export and assembly of K99 fimbrial subunits across the outer membrane. The protein is Outer membrane usher protein FanD (fanD) of Escherichia coli.